Here is a 178-residue protein sequence, read N- to C-terminus: Large ribosomal subunit protein uL6 (178 aa).

This sequence belongs to the universal ribosomal protein uL6 family. Part of the 50S ribosomal subunit.

In terms of biological role, this protein binds to the 23S rRNA, and is important in its secondary structure. It is located near the subunit interface in the base of the L7/L12 stalk, and near the tRNA binding site of the peptidyltransferase center. The polypeptide is Large ribosomal subunit protein uL6 (Methanobrevibacter smithii (strain ATCC 35061 / DSM 861 / OCM 144 / PS)).